The chain runs to 570 residues: Sulfite reductase [NADPH] hemoprotein beta-component (570 aa).

[4Fe-4S] cluster-binding residues include C434, C440, C479, and C483. Residue C483 coordinates siroheme.

This sequence belongs to the nitrite and sulfite reductase 4Fe-4S domain family. Alpha(8)-beta(8). The alpha component is a flavoprotein, the beta component is a hemoprotein. The cofactor is siroheme. [4Fe-4S] cluster is required as a cofactor.

It catalyses the reaction hydrogen sulfide + 3 NADP(+) + 3 H2O = sulfite + 3 NADPH + 4 H(+). It participates in sulfur metabolism; hydrogen sulfide biosynthesis; hydrogen sulfide from sulfite (NADPH route): step 1/1. Functionally, component of the sulfite reductase complex that catalyzes the 6-electron reduction of sulfite to sulfide. This is one of several activities required for the biosynthesis of L-cysteine from sulfate. The protein is Sulfite reductase [NADPH] hemoprotein beta-component of Salmonella paratyphi A (strain ATCC 9150 / SARB42).